The sequence spans 441 residues: Nucleolar and spindle-associated protein 1 (441 aa).

Disordered regions lie at residues 47–186 (ARKG…PNFK) and 216–267 (MNEL…LGLK). Polar residues-rich tracts occupy residues 56 to 74 (ESQT…ISNQ) and 100 to 116 (DSQQ…PTEF). Over residues 117-126 (QNHEKQESQD) the composition is skewed to basic and acidic residues. The residue at position 124 (S124) is a Phosphoserine; by ATM. S135 is subject to Phosphoserine. The span at 152–171 (RDSKVPSEGKKSLYTDESSK) shows a compositional bias: basic and acidic residues. A Phosphothreonine modification is found at T182. The segment at 237-382 (GRLSVASTPI…HKGKLKPWGQ (146 aa)) is interaction with microtubules. The residue at position 240 (S240) is a Phosphoserine. Polar residues predominate over residues 241 to 264 (VASTPISQRRSQGRSCGPASQSTL). At T244 the chain carries Phosphothreonine. Residues S247, S255, S269, S276, and S311 each carry the phosphoserine modification. The segment at 286-319 (AATKDNEHKRSLTKTPARKSAHVTVSGGTPKGEA) is disordered. 3 positions are modified to phosphothreonine: T314, T338, and T349. Residues S352 and S363 each carry the phosphoserine modification. The KEN box signature appears at 384–390 (KENNYLN). Positions 401–427 (KTYKQPHLQTKEEQRKKREQERKEKKA) are disordered. Residues 407–432 (HLQTKEEQRKKREQERKEKKAKVLGM) adopt a coiled-coil conformation. Residues 409–424 (QTKEEQRKKREQERKE) are compositionally biased toward basic and acidic residues. An N6-acetyllysine modification is found at K411.

This sequence belongs to the NUSAP family. Interacts with DNA and microtubules. Microtubule bundling is inhibited by IPO7, KPNA2 and KPNB1 while association with DNA is also inhibited by IPO7 and KPNA2. In terms of processing, ubiquitinated. Ubiquitination by FZR1 may lead to proteasome-dependent degradation of this protein. Post-translationally, phosphorylation by ATM in G2/M-phase induces mitotic arrest.

It localises to the cytoplasm. It is found in the nucleus. The protein resides in the nucleolus. Its subcellular location is the cytoskeleton. The protein localises to the spindle. It localises to the chromosome. Functionally, microtubule-associated protein with the capacity to bundle and stabilize microtubules. May associate with chromosomes and promote the organization of mitotic spindle microtubules around them. This is Nucleolar and spindle-associated protein 1 (NUSAP1) from Homo sapiens (Human).